We begin with the raw amino-acid sequence, 261 residues long: Cytochrome c oxidase subunit 3 (261 aa).

The Mitochondrial matrix segment spans residues 1–15 (MAHQAHPYHMVDPSP). A helical membrane pass occupies residues 16 to 34 (WPLTGATAALLMTSGLAIW). The Mitochondrial intermembrane portion of the chain corresponds to 35–40 (FHFHSL). The helical transmembrane segment at 41-66 (LLLYLGLTLLLLTMIQWWRDIIREGT) threads the bilayer. At 67-72 (FQGHHT) the chain is on the mitochondrial matrix side. A helical membrane pass occupies residues 73 to 105 (PPVQKGLRYGMILFIVSEVFFFLGFFWAFYHSS). Residues 106-128 (LAPTPELGGCWPPTGINPLDPFE) are Mitochondrial intermembrane-facing. Residues 129–152 (VPLLNTAVLLASGVTVTWAHHGLM) traverse the membrane as a helical segment. The Mitochondrial matrix segment spans residues 153–155 (EGN). Residues 156–183 (RKEAIQALTLTIILGVYFTALQAMEYYE) form a helical membrane-spanning segment. Topologically, residues 184 to 190 (APFTIAD) are mitochondrial intermembrane. The chain crosses the membrane as a helical span at residues 191-223 (GVYGTTFFVATGFHGLHVIIGSTFLAVCLLRQV). Residues 224 to 232 (LYHFTSEHH) lie on the Mitochondrial matrix side of the membrane. Residues 233–256 (FGFEAAAWYWHFVDVVWLFLYVSI) traverse the membrane as a helical segment. Topologically, residues 257–261 (YWWGS) are mitochondrial intermembrane.

It belongs to the cytochrome c oxidase subunit 3 family. As to quaternary structure, component of the cytochrome c oxidase (complex IV, CIV), a multisubunit enzyme composed of 14 subunits. The complex is composed of a catalytic core of 3 subunits MT-CO1, MT-CO2 and MT-CO3, encoded in the mitochondrial DNA, and 11 supernumerary subunits COX4I, COX5A, COX5B, COX6A, COX6B, COX6C, COX7A, COX7B, COX7C, COX8 and NDUFA4, which are encoded in the nuclear genome. The complex exists as a monomer or a dimer and forms supercomplexes (SCs) in the inner mitochondrial membrane with NADH-ubiquinone oxidoreductase (complex I, CI) and ubiquinol-cytochrome c oxidoreductase (cytochrome b-c1 complex, complex III, CIII), resulting in different assemblies (supercomplex SCI(1)III(2)IV(1) and megacomplex MCI(2)III(2)IV(2)).

The protein resides in the mitochondrion inner membrane. The catalysed reaction is 4 Fe(II)-[cytochrome c] + O2 + 8 H(+)(in) = 4 Fe(III)-[cytochrome c] + 2 H2O + 4 H(+)(out). Its function is as follows. Component of the cytochrome c oxidase, the last enzyme in the mitochondrial electron transport chain which drives oxidative phosphorylation. The respiratory chain contains 3 multisubunit complexes succinate dehydrogenase (complex II, CII), ubiquinol-cytochrome c oxidoreductase (cytochrome b-c1 complex, complex III, CIII) and cytochrome c oxidase (complex IV, CIV), that cooperate to transfer electrons derived from NADH and succinate to molecular oxygen, creating an electrochemical gradient over the inner membrane that drives transmembrane transport and the ATP synthase. Cytochrome c oxidase is the component of the respiratory chain that catalyzes the reduction of oxygen to water. Electrons originating from reduced cytochrome c in the intermembrane space (IMS) are transferred via the dinuclear copper A center (CU(A)) of subunit 2 and heme A of subunit 1 to the active site in subunit 1, a binuclear center (BNC) formed by heme A3 and copper B (CU(B)). The BNC reduces molecular oxygen to 2 water molecules using 4 electrons from cytochrome c in the IMS and 4 protons from the mitochondrial matrix. This chain is Cytochrome c oxidase subunit 3 (MT-CO3), found in Scyliorhinus canicula (Small-spotted catshark).